We begin with the raw amino-acid sequence, 575 residues long: MRQSIEELMEHAQNTLLAEGVIPADAKLGGIKVERPKDKSHGDFSINTAMVLAKQARMKPRDLAQRLVDALPSGQGVVSRCEIAGPGFINFFVTPERLRGVVADVLQRGGSYGQGNVGAGQKVLVEFVSANPTGPMHVGHGRGAVTGDVLARILECAGYAVQREYYLNDAGVQVQVLGRSVMLRYRQLFGDAVEVAEGCYPGDYVVDIARALKEKDQDKWLEVARAEPDEYPREMLEFAMQQVLTWIKADLARLNIRFDHWFSEFSLHSEGRIEHALEVLSQKGCLYEGVLEPPKGKKSEAWASRPQLLFKATDFGDEVDRALRKSDGSYTYFAADVAYHLNKAERGFERLVNIWGADHGGYVRRVQAALGALTGKQNLLDVVLIQMVNLTRGGEPVKMSKRAGTFVTLEEVVEATSSDAVRFWFLSRGSGAQLDFDLDLAVAKNNDNPVYYVQYAHARICSIWDKAQHEGVALQAQGWSGVDLSPLGEGAEWDLIRKLDLFPDVVEGAAVHQEPHRIPYYLLDLAAAFHTFYNSHRIMDVDAGTRDARLVLILAVKQVIANGLELLGVQQPRSM.

Positions 130–140 match the 'HIGH' region motif; the sequence is ANPTGPMHVGH.

This sequence belongs to the class-I aminoacyl-tRNA synthetase family. Monomer.

It localises to the cytoplasm. It carries out the reaction tRNA(Arg) + L-arginine + ATP = L-arginyl-tRNA(Arg) + AMP + diphosphate. This chain is Arginine--tRNA ligase, found in Magnetococcus marinus (strain ATCC BAA-1437 / JCM 17883 / MC-1).